A 285-amino-acid polypeptide reads, in one-letter code: Ribosomal RNA small subunit methyltransferase H (285 aa).

Residues 34–36 (AGH), D51, F75, D96, and H103 contribute to the S-adenosyl-L-methionine site. The disordered stretch occupies residues 259–285 (LVPSEKEAAQNPRARSAKLRAAEKEAP).

This sequence belongs to the methyltransferase superfamily. RsmH family.

It is found in the cytoplasm. It carries out the reaction cytidine(1402) in 16S rRNA + S-adenosyl-L-methionine = N(4)-methylcytidine(1402) in 16S rRNA + S-adenosyl-L-homocysteine + H(+). In terms of biological role, specifically methylates the N4 position of cytidine in position 1402 (C1402) of 16S rRNA. This is Ribosomal RNA small subunit methyltransferase H from Thermus thermophilus (strain ATCC 27634 / DSM 579 / HB8).